A 369-amino-acid polypeptide reads, in one-letter code: DNA replication and repair protein RecF (369 aa).

Residue 30–37 coordinates ATP; sequence GINAQGKT.

Belongs to the RecF family.

The protein localises to the cytoplasm. Its function is as follows. The RecF protein is involved in DNA metabolism; it is required for DNA replication and normal SOS inducibility. RecF binds preferentially to single-stranded, linear DNA. It also seems to bind ATP. In Macrococcus caseolyticus (strain JCSC5402) (Macrococcoides caseolyticum), this protein is DNA replication and repair protein RecF.